A 336-amino-acid chain; its full sequence is uncharacterized protein (336 aa).

Disordered regions lie at residues 29–93 and 116–147; these read GGVS…HSGA and LQERPAASQPWRTASAQKQHGSSQPHQGGVTG. Composition is skewed to polar residues over residues 70–82 and 125–141; these read SGGSCEGLSTSTA and PWRTASAQKQHGSSQPH.

This is an uncharacterized protein from Bos taurus (Bovine).